Consider the following 187-residue polypeptide: UPF0340 protein SPG_0604 (187 aa).

It belongs to the UPF0340 family.

The protein is UPF0340 protein SPG_0604 of Streptococcus pneumoniae serotype 19F (strain G54).